The chain runs to 381 residues: E3 ubiquitin-protein ligase At1g63170 (381 aa).

Residues 1–23 are disordered; the sequence is MSRETTTEATPLILTDGGGGRRS. Transmembrane regions (helical) follow at residues 74–94 and 107–127; these read VVVL…AVLV and VWII…CVEY. The disordered stretch occupies residues 135–161; the sequence is RRDLSPRSSSSSSSSSSSMDEEEGLGL. Over residues 140-152 the composition is skewed to low complexity; it reads PRSSSSSSSSSSS. Residues 170–194 adopt a coiled-coil conformation; sequence LELGQLENENNSFAKHLESANTMIS. A run of 3 helical transmembrane segments spans residues 189–209, 224–244, and 245–265; these read ANTM…SSGG, IVFL…ACVI, and GIAV…VAEQ. An RING-type; atypical zinc finger spans residues 325 to 366; sequence CCICLSAYEDETELRELPCGHHFHCGCVDKWLYINATCPLCK.

It localises to the membrane. It carries out the reaction S-ubiquitinyl-[E2 ubiquitin-conjugating enzyme]-L-cysteine + [acceptor protein]-L-lysine = [E2 ubiquitin-conjugating enzyme]-L-cysteine + N(6)-ubiquitinyl-[acceptor protein]-L-lysine.. The protein operates within protein modification; protein ubiquitination. Mediates E2-dependent protein ubiquitination. This is E3 ubiquitin-protein ligase At1g63170 from Arabidopsis thaliana (Mouse-ear cress).